The primary structure comprises 89 residues: Small ribosomal subunit protein uS14 (89 aa).

It belongs to the universal ribosomal protein uS14 family. In terms of assembly, part of the 30S ribosomal subunit. Contacts proteins S3 and S10.

Its function is as follows. Binds 16S rRNA, required for the assembly of 30S particles and may also be responsible for determining the conformation of the 16S rRNA at the A site. This Chlorobaculum tepidum (strain ATCC 49652 / DSM 12025 / NBRC 103806 / TLS) (Chlorobium tepidum) protein is Small ribosomal subunit protein uS14.